We begin with the raw amino-acid sequence, 439 residues long: 23S rRNA (uracil(1939)-C(5))-methyltransferase RlmD (439 aa).

The region spanning 10-68 (KSTQPQRIEFTVDSLDHHCVGIGRHQGKAIFIEGALPGEQVKARILDDKKQYAHAALQQ) is the TRAM domain. Positions 81, 87, 90, and 169 each coordinate [4Fe-4S] cluster. Positions 273, 302, 307, 323, 350, and 371 each coordinate S-adenosyl-L-methionine. Cys-397 acts as the Nucleophile in catalysis.

Belongs to the class I-like SAM-binding methyltransferase superfamily. RNA M5U methyltransferase family. RlmD subfamily.

It carries out the reaction uridine(1939) in 23S rRNA + S-adenosyl-L-methionine = 5-methyluridine(1939) in 23S rRNA + S-adenosyl-L-homocysteine + H(+). Functionally, catalyzes the formation of 5-methyl-uridine at position 1939 (m5U1939) in 23S rRNA. This is 23S rRNA (uracil(1939)-C(5))-methyltransferase RlmD from Aeromonas salmonicida (strain A449).